A 356-amino-acid chain; its full sequence is UDP-3-O-acylglucosamine N-acyltransferase (356 aa).

Histidine 242 functions as the Proton acceptor in the catalytic mechanism.

The protein belongs to the transferase hexapeptide repeat family. LpxD subfamily. As to quaternary structure, homotrimer.

It carries out the reaction a UDP-3-O-[(3R)-3-hydroxyacyl]-alpha-D-glucosamine + a (3R)-hydroxyacyl-[ACP] = a UDP-2-N,3-O-bis[(3R)-3-hydroxyacyl]-alpha-D-glucosamine + holo-[ACP] + H(+). It participates in bacterial outer membrane biogenesis; LPS lipid A biosynthesis. Its function is as follows. Catalyzes the N-acylation of UDP-3-O-acylglucosamine using 3-hydroxyacyl-ACP as the acyl donor. Is involved in the biosynthesis of lipid A, a phosphorylated glycolipid that anchors the lipopolysaccharide to the outer membrane of the cell. This Acinetobacter baumannii (strain AB0057) protein is UDP-3-O-acylglucosamine N-acyltransferase.